Reading from the N-terminus, the 150-residue chain is UPF0756 membrane protein PC1_1142 (150 aa).

The next 4 membrane-spanning stretches (helical) occupy residues 1 to 21, 51 to 71, 82 to 102, and 127 to 147; these read MAYL…GIIS, YGLS…IASG, FLHW…WLGG, and ALFR…SLLI.

It belongs to the UPF0756 family.

The protein localises to the cell membrane. This is UPF0756 membrane protein PC1_1142 from Pectobacterium carotovorum subsp. carotovorum (strain PC1).